Reading from the N-terminus, the 169-residue chain is NADH-quinone oxidoreductase subunit B (169 aa).

The [4Fe-4S] cluster site is built by cysteine 45, cysteine 46, cysteine 111, and cysteine 141.

The protein belongs to the complex I 20 kDa subunit family. NDH-1 is composed of 14 different subunits. Subunits NuoB, C, D, E, F, and G constitute the peripheral sector of the complex. [4Fe-4S] cluster is required as a cofactor.

Its subcellular location is the cell membrane. The enzyme catalyses a quinone + NADH + 5 H(+)(in) = a quinol + NAD(+) + 4 H(+)(out). Functionally, NDH-1 shuttles electrons from NADH, via FMN and iron-sulfur (Fe-S) centers, to quinones in the respiratory chain. The immediate electron acceptor for the enzyme in this species is believed to be a menaquinone. Couples the redox reaction to proton translocation (for every two electrons transferred, four hydrogen ions are translocated across the cytoplasmic membrane), and thus conserves the redox energy in a proton gradient. The sequence is that of NADH-quinone oxidoreductase subunit B from Clostridium beijerinckii (strain ATCC 51743 / NCIMB 8052) (Clostridium acetobutylicum).